The sequence spans 89 residues: MSLSVEAKAKILAEFGRCENDTGSSEVQVALLTAQINHLQGHFKEHIHDHHSRRGLLRMVSTRRKLLAYLKRTENVRYQELIKKLGLRR.

Belongs to the universal ribosomal protein uS15 family. Part of the 30S ribosomal subunit. Forms a bridge to the 50S subunit in the 70S ribosome, contacting the 23S rRNA.

One of the primary rRNA binding proteins, it binds directly to 16S rRNA where it helps nucleate assembly of the platform of the 30S subunit by binding and bridging several RNA helices of the 16S rRNA. In terms of biological role, forms an intersubunit bridge (bridge B4) with the 23S rRNA of the 50S subunit in the ribosome. This Shewanella piezotolerans (strain WP3 / JCM 13877) protein is Small ribosomal subunit protein uS15.